A 300-amino-acid polypeptide reads, in one-letter code: uncharacterized protein (300 aa).

A signal peptide spans 1-20 (MRLLISCILILSILVNFISG). Over 21–279 (HAVLVAPTPF…PCSIYGDGNG (259 aa)) the chain is Extracellular. 3 N-linked (GlcNAc...) asparagine glycosylation sites follow: Asn-56, Asn-217, and Asn-278. The chain crosses the membrane as a helical span at residues 280–300 (SNLIIIPTLLIISILSLILMF).

The protein localises to the membrane. This is an uncharacterized protein from Dictyostelium discoideum (Social amoeba).